A 461-amino-acid chain; its full sequence is TWiK family of potassium channels protein 18 (461 aa).

Residues 1–21 (MAIVAQGVSTILTTFQKTFKG) lie on the Cytoplasmic side of the membrane. Residues 22-42 (LLPLIILVAYTLLGAWIFWMI) traverse the membrane as a helical segment. A glycan (N-linked (GlcNAc...) asparagine) is linked at Asn88. An intramembrane region (pore-forming) is located at residues 116 to 136 (FLGSIFYCMTVYTTIGYGNIV). Residues 144-164 (FATILYAFIGIPLTVLSLYCL) traverse the membrane as a helical segment. At 165-224 (GSLFAKGCKMLWRFFLKSTRVVSKDLSNKISEAADNIEEGTTAITPSAEKTENNDDDLLS) the chain is on the cytoplasmic side. Residues 225–245 (FPISGLLLITVIWVIFCAVLF) traverse the membrane as a helical segment. The segment at residues 253-273 (FGTSLYFTLISFTTIGFGDIL) is an intramembrane region (pore-forming). A helical transmembrane segment spans residues 281–301 (PIVGVLLLIGLSLVSTVMTLI). Residues 302–461 (QQQIEALASG…GNEDYLEHDI (160 aa)) are Cytoplasmic-facing. The disordered stretch occupies residues 328 to 347 (REDGEVDEHVDPEEDPENNK).

Belongs to the two pore domain potassium channel (TC 1.A.1.8) family. In terms of tissue distribution, expressed in body wall muscle.

It is found in the membrane. Its function is as follows. Outwardly rectifying potassium channel protein; activity is sharply augmented by increase in temperature. The protein is TWiK family of potassium channels protein 18 (twk-18) of Caenorhabditis elegans.